The primary structure comprises 171 residues: Crossover junction endodeoxyribonuclease RuvC (171 aa).

Catalysis depends on residues aspartate 7, glutamate 74, and aspartate 147. The Mg(2+) site is built by aspartate 7, glutamate 74, and aspartate 147.

This sequence belongs to the RuvC family. In terms of assembly, homodimer which binds Holliday junction (HJ) DNA. The HJ becomes 2-fold symmetrical on binding to RuvC with unstacked arms; it has a different conformation from HJ DNA in complex with RuvA. In the full resolvosome a probable DNA-RuvA(4)-RuvB(12)-RuvC(2) complex forms which resolves the HJ. Mg(2+) is required as a cofactor.

It localises to the cytoplasm. The catalysed reaction is Endonucleolytic cleavage at a junction such as a reciprocal single-stranded crossover between two homologous DNA duplexes (Holliday junction).. Its function is as follows. The RuvA-RuvB-RuvC complex processes Holliday junction (HJ) DNA during genetic recombination and DNA repair. Endonuclease that resolves HJ intermediates. Cleaves cruciform DNA by making single-stranded nicks across the HJ at symmetrical positions within the homologous arms, yielding a 5'-phosphate and a 3'-hydroxyl group; requires a central core of homology in the junction. The consensus cleavage sequence is 5'-(A/T)TT(C/G)-3'. Cleavage occurs on the 3'-side of the TT dinucleotide at the point of strand exchange. HJ branch migration catalyzed by RuvA-RuvB allows RuvC to scan DNA until it finds its consensus sequence, where it cleaves and resolves the cruciform DNA. The protein is Crossover junction endodeoxyribonuclease RuvC of Acidobacterium capsulatum (strain ATCC 51196 / DSM 11244 / BCRC 80197 / JCM 7670 / NBRC 15755 / NCIMB 13165 / 161).